A 378-amino-acid polypeptide reads, in one-letter code: Mitogen-activated protein kinase mpkC (378 aa).

In terms of domain architecture, Protein kinase spans 20–300 (YVNPQPIGMG…AQDALRYPYL (281 aa)). Residues 26–34 (IGMGSFGLV) and Lys49 each bind ATP. Asp141 acts as the Proton acceptor in catalysis. Residue Thr171 is modified to Phosphothreonine. The TXY signature appears at 171-173 (TGY). Tyr173 bears the Phosphotyrosine mark.

It belongs to the protein kinase superfamily. Ser/Thr protein kinase family. MAP kinase subfamily. HOG1 sub-subfamily. As to quaternary structure, interacts with sakA upon osmotic and cell wall stresses. Mg(2+) serves as cofactor. In terms of processing, dually phosphorylated on Thr-171 and Tyr-173, which activates the enzyme.

The protein localises to the cytoplasm. It is found in the nucleus. It catalyses the reaction L-seryl-[protein] + ATP = O-phospho-L-seryl-[protein] + ADP + H(+). The catalysed reaction is L-threonyl-[protein] + ATP = O-phospho-L-threonyl-[protein] + ADP + H(+). Its activity is regulated as follows. Activated by tyrosine and threonine phosphorylation. Functionally, mitogen-activated protein kinase; part of an osmotic and general signal pathways involved in regulation of the response to the cell wall damage, oxidative stress, drug resistance, and establishment of infection. Required for growth on media where sorbitol or mannitol is the sole carbon source. With sakA, plays a redundant or cooperative role in the conidial stress resistance. Also plays a supportive role in osmotic stress adaptation when sakA is deficient. Involved in paradoxical growth, the cell wall integrity (CWI) pathway and biofilm formation. Acts by modulating sakA activity upon exposure to several types o stresses and during cell wall biosynthesis. Also collaborates with sakA to allow ful virulence in a neutropenic murine model of invasive pulmonary aspergillosis. MpkC and sakA have both independent and collaborative functions during the transcriptional response to transient osmotic stress, and mpkC plays a major role in the modulation of the response to DNA metabolism while activating mitochondrial functions and cation transport. In Aspergillus fumigatus (strain ATCC MYA-4609 / CBS 101355 / FGSC A1100 / Af293) (Neosartorya fumigata), this protein is Mitogen-activated protein kinase mpkC (mpkC).